Reading from the N-terminus, the 154-residue chain is uncharacterized protein (154 aa).

This is an uncharacterized protein from Methanocaldococcus jannaschii (strain ATCC 43067 / DSM 2661 / JAL-1 / JCM 10045 / NBRC 100440) (Methanococcus jannaschii).